A 491-amino-acid polypeptide reads, in one-letter code: UDP-N-acetylmuramate--L-alanine ligase (491 aa).

126–132 lines the ATP pocket; sequence GTHGKTT.

It belongs to the MurCDEF family.

It localises to the cytoplasm. The enzyme catalyses UDP-N-acetyl-alpha-D-muramate + L-alanine + ATP = UDP-N-acetyl-alpha-D-muramoyl-L-alanine + ADP + phosphate + H(+). Its pathway is cell wall biogenesis; peptidoglycan biosynthesis. Functionally, cell wall formation. This Shigella boydii serotype 18 (strain CDC 3083-94 / BS512) protein is UDP-N-acetylmuramate--L-alanine ligase.